Consider the following 899-residue polypeptide: Solute carrier family 12 member 9 (899 aa).

Residues 1 to 42 are Cytoplasmic-facing; the sequence is MANEHSPLLVHGVYSMMGNAEDSRGGSAGTGEASNPKTDPRK. Residues 43–63 traverse the membrane as a helical segment; that stretch reads LNTFFGVMVPTILSMFSIVLF. The Extracellular portion of the chain corresponds to 64-78; that stretch reads LRTGFVVGHAGLLHG. A helical transmembrane segment spans residues 79-99; the sequence is LLMLFVAYFIISLTILSICAI. Residues 100 to 125 lie on the Cytoplasmic side of the membrane; it reads STNGAVEGGGAYFMISRSLGPEFGGS. A helical membrane pass occupies residues 126-146; it reads IGLMFYLAKVCACGVYVLGLV. Topologically, residues 147–175 are extracellular; that stretch reads EAIMDVFGQDPGSSVAQGLRVLPQGYWYT. A helical membrane pass occupies residues 176–196; sequence VLYSSVVLLLCMLVCLVGAHI. The Cytoplasmic portion of the chain corresponds to 197–201; it reads YAKAS. Residues 202-222 traverse the membrane as a helical segment; it reads FLILLVVTVSLISIIISPLIV. Residues 223-269 are Extracellular-facing; that stretch reads SPQGFNITHTYGNNHSVTVSPSYTGFNSTTLKNNLGPRYSLDYSTNT. N-linked (GlcNAc...) asparagine glycans are attached at residues Asn228, Asn236, and Asn249. The chain crosses the membrane as a helical span at residues 270 to 290; that stretch reads MMSFATVFAVMFTSCTGIMAG. Residues 291 to 306 are Cytoplasmic-facing; sequence ANMSGELKNPSESIPK. A helical membrane pass occupies residues 307–327; it reads GTIMAVAYTFTVYVLLYLLLS. At 328-350 the chain is on the extracellular side; it reads STCDRSLLLNDYAVFQRVNVWPP. A helical transmembrane segment spans residues 351–371; it reads FVTIGVYCASLSAAMCSMIGA. The Cytoplasmic portion of the chain corresponds to 372-373; sequence SR. Residues 374-394 form a helical membrane-spanning segment; the sequence is ILHALALDQLFGLPLAPAAVT. Topologically, residues 395–399 are extracellular; that stretch reads SSSGN. A helical membrane pass occupies residues 400 to 420; that stretch reads PWVSVLYTWALVQCTLFAGQL. A topological domain (cytoplasmic) is located at residue Asn421. Residues 422–442 traverse the membrane as a helical segment; that stretch reads VIAGIVTVFYLLAYAAVDLAC. Over 443-455 the chain is Extracellular; it reads LALEWASAPNFRP. A helical membrane pass occupies residues 456-476; sequence TFQFFSWHTCLLGIISCVVMM. Over 477-487 the chain is Extracellular; the sequence is FVINPVYSSAS. The chain crosses the membrane as a helical span at residues 488–510; sequence IVLLLLLLLFLHYRSPTSSWGYI. At 511–563 the chain is on the cytoplasmic side; the sequence is SQALIFHQVRKYLLMLDSRKDHVKFWRPQVLLMVSNPRSSCQLICFVNQLKKG. Residues 564–584 traverse the membrane as a helical segment; the sequence is GLFVLGHVQIGDLDVLPADPV. Topologically, residues 585–749 are extracellular; that stretch reads QPQYNFWLSL…NLLTPGSASY (165 aa). Residues 750–770 traverse the membrane as a helical segment; the sequence is ADVGSLFLLQMACVLNMASGW. Over 771–899 the chain is Cytoplasmic; that stretch reads RRARLRIFVC…GVTPVTCTEL (129 aa).

It belongs to the SLC12A transporter family.

Its subcellular location is the cell membrane. It localises to the lysosome membrane. Seems to correspond to a subunit of a multimeric transport system and thus, additional subunits may be required for its function. May play a role in lysosomal ion flux and osmoregulation. The sequence is that of Solute carrier family 12 member 9 (slc12a9) from Danio rerio (Zebrafish).